The following is a 68-amino-acid chain: U1-agatoxin-Ta1c (68 aa).

The first 17 residues, 1 to 17, serve as a signal peptide directing secretion; sequence MKLQLMICLVLLPCFFC. Disulfide bonds link Cys-23–Cys-53, Cys-39–Cys-49, and Cys-42–Cys-62. Lys-67 carries the lysine amide modification.

It belongs to the helical arthropod-neuropeptide-derived (HAND) family. Expressed by the venom gland.

Its subcellular location is the secreted. Functionally, toxin that paralyzes insects. May have a direct effect on the insect central nervous system. The polypeptide is U1-agatoxin-Ta1c (Eratigena agrestis (Hobo spider)).